The sequence spans 482 residues: Bifunctional protein HldE (482 aa).

The interval M1–L322 is ribokinase. N198 to E201 lines the ATP pocket. The active site involves D267. Residues F350–S482 are cytidylyltransferase.

In the N-terminal section; belongs to the carbohydrate kinase PfkB family. It in the C-terminal section; belongs to the cytidylyltransferase family. In terms of assembly, homodimer.

The enzyme catalyses D-glycero-beta-D-manno-heptose 7-phosphate + ATP = D-glycero-beta-D-manno-heptose 1,7-bisphosphate + ADP + H(+). The catalysed reaction is D-glycero-beta-D-manno-heptose 1-phosphate + ATP + H(+) = ADP-D-glycero-beta-D-manno-heptose + diphosphate. It participates in nucleotide-sugar biosynthesis; ADP-L-glycero-beta-D-manno-heptose biosynthesis; ADP-L-glycero-beta-D-manno-heptose from D-glycero-beta-D-manno-heptose 7-phosphate: step 1/4. Its pathway is nucleotide-sugar biosynthesis; ADP-L-glycero-beta-D-manno-heptose biosynthesis; ADP-L-glycero-beta-D-manno-heptose from D-glycero-beta-D-manno-heptose 7-phosphate: step 3/4. The protein operates within bacterial outer membrane biogenesis; LPS core biosynthesis. Its function is as follows. Catalyzes the phosphorylation of D-glycero-D-manno-heptose 7-phosphate at the C-1 position to selectively form D-glycero-beta-D-manno-heptose-1,7-bisphosphate. Functionally, catalyzes the ADP transfer from ATP to D-glycero-beta-D-manno-heptose 1-phosphate, yielding ADP-D-glycero-beta-D-manno-heptose. This is Bifunctional protein HldE from Helicobacter hepaticus (strain ATCC 51449 / 3B1).